Consider the following 341-residue polypeptide: Arfaptin-2 (341 aa).

Residues 46-85 (NETSIVSGGYGGSGDGLIPTGSGRHPSHSTTPSGPGDEVA) form a disordered region. Ser-72 carries the phosphoserine modification. Thr-76 bears the Phosphothreonine mark. Residues 121–321 (TVDLELELQI…NQKQLEQTLQ (201 aa)) form the AH domain.

In terms of assembly, forms homodimers or heterodimers with ARFIP1. Interacts with RAC1. Specifically binds to GTP-bound ARF1 and ARF6, but binds to RAC1.GTP and RAC1.GDP with similar affinities. Interacts with ARL1. Interacts (via N-terminus) with IKBKB and IKBKG; these interactions inhibit activation of NF-kappa-B.

The protein localises to the golgi apparatus. Its subcellular location is the trans-Golgi network membrane. In terms of biological role, plays a role in constitutive metalloproteinase (MMP) secretion from the trans Golgi network. May have important functions during vesicle biogenesis at certain cargo subdomains, which could be predominantly utilized by secreted MMPs, such as MMP7 and MMP2. Also involved in autophagy by regulating the starvation-dependent trafficking of ATG9A vesicles which deliver the phosphatidylinositol 4-kinase beta (PI4KB) to the autophagosome initiation site. Involved in phagophore growth during mitophagy by regulating ATG9A trafficking to mitochondria. In addition, plays a role in NF-kappa-B inhibition by interacting with IKBKB and IKBKG. In Homo sapiens (Human), this protein is Arfaptin-2.